The chain runs to 316 residues: tRNA-cytidine(32) 2-sulfurtransferase (316 aa).

The disordered stretch occupies residues 1 to 31; sequence MGAVIDDSMPGPGADATGTGPSDARTERETR. Over residues 10–21 the composition is skewed to low complexity; sequence PGPGADATGTGP. The short motif at 62–67 is the PP-loop motif element; sequence SGGKDS. [4Fe-4S] cluster-binding residues include Cys137, Cys140, and Cys228.

It belongs to the TtcA family. Homodimer. The cofactor is Mg(2+). [4Fe-4S] cluster is required as a cofactor.

It is found in the cytoplasm. It carries out the reaction cytidine(32) in tRNA + S-sulfanyl-L-cysteinyl-[cysteine desulfurase] + AH2 + ATP = 2-thiocytidine(32) in tRNA + L-cysteinyl-[cysteine desulfurase] + A + AMP + diphosphate + H(+). The protein operates within tRNA modification. Catalyzes the ATP-dependent 2-thiolation of cytidine in position 32 of tRNA, to form 2-thiocytidine (s(2)C32). The sulfur atoms are provided by the cysteine/cysteine desulfurase (IscS) system. The sequence is that of tRNA-cytidine(32) 2-sulfurtransferase from Verminephrobacter eiseniae (strain EF01-2).